An 85-amino-acid chain; its full sequence is Probable dolichol-phosphate mannosyltransferase subunit 3 (85 aa).

Helical transmembrane passes span 13-33 (VLLV…LSYI) and 37-57 (AHCL…VATF).

It belongs to the DPM3 family.

Its subcellular location is the endoplasmic reticulum membrane. It participates in protein modification; protein glycosylation. Functionally, stabilizer subunit of the dolichol-phosphate-mannose synthase complex. In Caenorhabditis briggsae, this protein is Probable dolichol-phosphate mannosyltransferase subunit 3.